A 487-amino-acid chain; its full sequence is Betaine aldehyde dehydrogenase (487 aa).

K(+) contacts are provided by Ile27 and Asp93. An NAD(+)-binding site is contributed by 149–151 (GAW). Catalysis depends on Lys161, which acts as the Charge relay system. NAD(+) is bound by residues 175-178 (KPSE) and 228-231 (SVPT). Residue Leu243 participates in K(+) binding. Glu249 acts as the Proton acceptor in catalysis. Residues Gly251, Cys283, and Glu384 each contribute to the NAD(+) site. The active-site Nucleophile is Cys283. Cys283 carries the cysteine sulfenic acid (-SOH) modification. K(+) is bound by residues Lys454 and Gly457. Glu461 acts as the Charge relay system in catalysis.

This sequence belongs to the aldehyde dehydrogenase family. As to quaternary structure, dimer of dimers. It depends on K(+) as a cofactor.

The enzyme catalyses betaine aldehyde + NAD(+) + H2O = glycine betaine + NADH + 2 H(+). Its pathway is amine and polyamine biosynthesis; betaine biosynthesis via choline pathway; betaine from betaine aldehyde: step 1/1. Its function is as follows. Involved in the biosynthesis of the osmoprotectant glycine betaine. Catalyzes the irreversible oxidation of betaine aldehyde to the corresponding acid. The polypeptide is Betaine aldehyde dehydrogenase (Brucella canis (strain ATCC 23365 / NCTC 10854 / RM-666)).